The chain runs to 104 residues: UPF0147 protein MK1586 (104 aa).

Belongs to the UPF0147 family.

This chain is UPF0147 protein MK1586, found in Methanopyrus kandleri (strain AV19 / DSM 6324 / JCM 9639 / NBRC 100938).